The sequence spans 260 residues: UPF0246 protein BURPS668_1321 (260 aa).

The protein belongs to the UPF0246 family.

This is UPF0246 protein BURPS668_1321 from Burkholderia pseudomallei (strain 668).